The sequence spans 141 residues: Hemoglobin subunit alpha (141 aa).

The Globin domain occupies 1–141 (VLSSADKNNV…VSTVLTSKYR (141 aa)). Serine 3 carries the phosphoserine modification. Residues lysine 7 and lysine 11 each carry the N6-succinyllysine modification. The residue at position 16 (lysine 16) is an N6-acetyllysine; alternate. Lysine 16 is subject to N6-succinyllysine; alternate. A Phosphotyrosine modification is found at tyrosine 24. Serine 35 is subject to Phosphoserine. Lysine 40 bears the N6-succinyllysine mark. The residue at position 49 (serine 49) is a Phosphoserine. O2 is bound at residue histidine 58. Residue histidine 87 coordinates heme b. Position 102 is a phosphoserine (serine 102). Residue threonine 108 is modified to Phosphothreonine. Serine 124 carries the post-translational modification Phosphoserine. Phosphothreonine occurs at positions 134 and 137. Serine 138 is modified (phosphoserine).

The protein belongs to the globin family. Heterotetramer of two alpha chains and two beta chains. As to expression, red blood cells.

In terms of biological role, involved in oxygen transport from the lung to the various peripheral tissues. Hemopressin acts as an antagonist peptide of the cannabinoid receptor CNR1. Hemopressin-binding efficiently blocks cannabinoid receptor CNR1 and subsequent signaling. In Panthera tigris sumatrae (Sumatran tiger), this protein is Hemoglobin subunit alpha (HBA).